Reading from the N-terminus, the 592-residue chain is ATP-binding protein Uup (592 aa).

2 consecutive ABC transporter domains span residues 1–221 (MPLI…RIEK) and 289–516 (FKLK…KSNI). ATP-binding positions include 36–43 (GKNGAGKS) and 321–328 (GNNGSGKS). Positions 516–550 (ISFLKTKQNQVKKELKKVLNEIEKIENSIKTLKIQ) form a coiled coil. Residues 518 to 592 (FLKTKQNQVK…IYWENLEKKL (75 aa)) form a C-terminal domain (CTD), binds DNA region.

The protein belongs to the ABC transporter superfamily. ABCF family. Uup subfamily.

It is found in the cytoplasm. It catalyses the reaction ATP + H2O = ADP + phosphate + H(+). In terms of biological role, probably plays a role in ribosome assembly or function. May be involved in resolution of branched DNA intermediates that result from template switching in postreplication gaps. Binds DNA and has ATPase activity. The chain is ATP-binding protein Uup from Buchnera aphidicola subsp. Schizaphis graminum (strain Sg).